We begin with the raw amino-acid sequence, 398 residues long: 8-amino-7-oxononanoate synthase (398 aa).

R26 contacts substrate. Residue 113–114 (GF) coordinates pyridoxal 5'-phosphate. Residue H138 coordinates substrate. Positions 181, 209, and 238 each coordinate pyridoxal 5'-phosphate. N6-(pyridoxal phosphate)lysine is present on K241. Residue T355 coordinates substrate.

It belongs to the class-II pyridoxal-phosphate-dependent aminotransferase family. BioF subfamily. As to quaternary structure, homodimer. The cofactor is pyridoxal 5'-phosphate.

It carries out the reaction 6-carboxyhexanoyl-[ACP] + L-alanine + H(+) = (8S)-8-amino-7-oxononanoate + holo-[ACP] + CO2. It functions in the pathway cofactor biosynthesis; biotin biosynthesis. Catalyzes the decarboxylative condensation of pimeloyl-[acyl-carrier protein] and L-alanine to produce 8-amino-7-oxononanoate (AON), [acyl-carrier protein], and carbon dioxide. This is 8-amino-7-oxononanoate synthase from Aeromonas hydrophila subsp. hydrophila (strain ATCC 7966 / DSM 30187 / BCRC 13018 / CCUG 14551 / JCM 1027 / KCTC 2358 / NCIMB 9240 / NCTC 8049).